The sequence spans 427 residues: Inward rectifier potassium channel 2 (427 aa).

At Met-1 to Trp-81 the chain is on the cytoplasmic side. The residue at position 76 (Cys-76) is an S-nitrosocysteine. A helical transmembrane segment spans residues Arg-82–Ile-106. The Extracellular portion of the chain corresponds to Ala-107 to Ser-128. The helical; Pore-forming intramembrane region spans Phe-129–Gln-140. Residues Thr-141 to Phe-147 constitute an intramembrane region (pore-forming). Residues Thr-142–Phe-147 carry the Selectivity filter motif. Over Arg-148 to Val-156 the chain is Extracellular. The chain crosses the membrane as a helical span at residues Ala-157–Ala-178. Residues Val-179 to Ile-427 lie on the Cytoplasmic side of the membrane. Residues Ala-181 to Leu-208 are polyphosphoinositide (PIP2)-binding. The tract at residues Ser-384 to Ile-427 is disordered. A PDZ-binding motif is present at residues Ser-425–Ile-427.

This sequence belongs to the inward rectifier-type potassium channel (TC 1.A.2.1) family. KCNJ2 subfamily. In terms of assembly, homotetramer. Homomultimeric and heteromultimeric association with KCNJ4/Kir2.3. Can form heteromeric channels with Kir2.6/KCNJ18. Associates, via its PDZ-recognition domain, with a complex containing LIN7A, LIN7B, LIN7C, DLG1, CASK and APBA1. Post-translationally, S-nitrosylation increases the open probability and inward rectifying currents.

It is found in the cell membrane. The protein resides in the sarcolemma. Its subcellular location is the T-tubule. It catalyses the reaction K(+)(in) = K(+)(out). Activated by phosphatidylinositol 4,5 biphosphate (PtdIns(4,5)P2). Functionally, inward rectifier potassium channels are characterized by a greater tendency to allow potassium to flow into the cell rather than out of it. Their voltage dependence is regulated by the concentration of extracellular potassium; as external potassium is raised, the voltage range of the channel opening shifts to more positive voltages. The inward rectification is mainly due to the blockage of outward current by internal magnesium. Blocked by external barium or cesium. Probably participates in establishing action potential waveform and excitability of neuronal and muscle tissues. This is Inward rectifier potassium channel 2 (KCNJ2) from Canis lupus familiaris (Dog).